The primary structure comprises 441 residues: BTB/POZ domain-containing protein At2g24240 (441 aa).

The BTB domain occupies 6–76 (DRIKFNVGGR…LRTGDLNVPA (71 aa)).

It participates in protein modification; protein ubiquitination. Its function is as follows. May act as a substrate-specific adapter of an E3 ubiquitin-protein ligase complex (CUL3-RBX1-BTB) which mediates the ubiquitination and subsequent proteasomal degradation of target proteins. This Arabidopsis thaliana (Mouse-ear cress) protein is BTB/POZ domain-containing protein At2g24240.